The chain runs to 468 residues: 3-isopropylmalate dehydratase large subunit (468 aa).

Residues C347, C407, and C410 each contribute to the [4Fe-4S] cluster site.

It belongs to the aconitase/IPM isomerase family. LeuC type 1 subfamily. As to quaternary structure, heterodimer of LeuC and LeuD. The cofactor is [4Fe-4S] cluster.

It carries out the reaction (2R,3S)-3-isopropylmalate = (2S)-2-isopropylmalate. It functions in the pathway amino-acid biosynthesis; L-leucine biosynthesis; L-leucine from 3-methyl-2-oxobutanoate: step 2/4. Catalyzes the isomerization between 2-isopropylmalate and 3-isopropylmalate, via the formation of 2-isopropylmaleate. This Synechocystis sp. (strain ATCC 27184 / PCC 6803 / Kazusa) protein is 3-isopropylmalate dehydratase large subunit.